A 307-amino-acid chain; its full sequence is Metapyrocatechase (307 aa).

VOC domains are found at residues 7–122 (RPGH…LYAD) and 150–269 (RFDH…VFCG). Fe cation-binding residues include His153, His214, and Glu265.

Belongs to the extradiol ring-cleavage dioxygenase family. Homotetramer. Fe(2+) serves as cofactor.

The enzyme catalyses catechol + O2 = (2Z,4E)-2-hydroxy-6-oxohexa-2,4-dienoate + H(+). It functions in the pathway aromatic compound metabolism; benzoate degradation via hydroxylation. The chain is Metapyrocatechase (dmpB) from Pseudomonas sp. (strain CF600).